A 311-amino-acid polypeptide reads, in one-letter code: tRNA-cytidine(32) 2-sulfurtransferase (311 aa).

A PP-loop motif motif is present at residues 47–52; it reads SGGKDS. Positions 122, 125, and 213 each coordinate [4Fe-4S] cluster.

The protein belongs to the TtcA family. As to quaternary structure, homodimer. Requires Mg(2+) as cofactor. It depends on [4Fe-4S] cluster as a cofactor.

It is found in the cytoplasm. It carries out the reaction cytidine(32) in tRNA + S-sulfanyl-L-cysteinyl-[cysteine desulfurase] + AH2 + ATP = 2-thiocytidine(32) in tRNA + L-cysteinyl-[cysteine desulfurase] + A + AMP + diphosphate + H(+). It participates in tRNA modification. In terms of biological role, catalyzes the ATP-dependent 2-thiolation of cytidine in position 32 of tRNA, to form 2-thiocytidine (s(2)C32). The sulfur atoms are provided by the cysteine/cysteine desulfurase (IscS) system. The polypeptide is tRNA-cytidine(32) 2-sulfurtransferase (Escherichia coli O7:K1 (strain IAI39 / ExPEC)).